Consider the following 215-residue polypeptide: Protein FAM27D1 (215 aa).

Residues 74-172 (QPKTHTHTGM…RGTQADLSSR (99 aa)) form a disordered region. The segment covering 87–108 (THRERERNTQRLRDRERRENGR) has biased composition (basic and acidic residues). Positions 109 to 122 (HTHRHTHTLTHTHT) are enriched in basic residues. Basic and acidic residues-rich tracts occupy residues 123-139 (HRDT…ETHT) and 149-162 (SAHD…REQP). Residues 163–172 (RGTQADLSSR) are compositionally biased toward polar residues.

This sequence belongs to the FAM27 family.

In Homo sapiens (Human), this protein is Protein FAM27D1 (FAM27D1).